We begin with the raw amino-acid sequence, 302 residues long: Pyridoxal kinase (302 aa).

3 residues coordinate substrate: S10, T45, and Y122. Residues 181 to 182 (TS) and 215 to 227 (VGPKFNDYYTGTG) contribute to the ATP site. Position 228 (D228) interacts with substrate.

Belongs to the pyridoxine kinase family. In terms of assembly, homodimer. A divalent metal cation serves as cofactor.

It localises to the cytoplasm. The catalysed reaction is pyridoxal + ATP = pyridoxal 5'-phosphate + ADP + H(+). It participates in cofactor metabolism; pyridoxal 5'-phosphate salvage; pyridoxal 5'-phosphate from pyridoxal: step 1/1. Functionally, required for synthesis of pyridoxal-5-phosphate from vitamin B6. This is Pyridoxal kinase (pykA) from Dictyostelium discoideum (Social amoeba).